The primary structure comprises 228 residues: 2,3-bisphosphoglycerate-dependent phosphoglycerate mutase (228 aa).

Substrate-binding positions include 8–15, 21–22, Arg-60, 87–90, Lys-98, 114–115, and 183–184; these read RHGLSEWN, TG, ERHY, RR, and GN. His-9 serves as the catalytic Tele-phosphohistidine intermediate. The Proton donor/acceptor role is filled by Glu-87.

Belongs to the phosphoglycerate mutase family. BPG-dependent PGAM subfamily.

The enzyme catalyses (2R)-2-phosphoglycerate = (2R)-3-phosphoglycerate. It participates in carbohydrate degradation; glycolysis; pyruvate from D-glyceraldehyde 3-phosphate: step 3/5. Its function is as follows. Catalyzes the interconversion of 2-phosphoglycerate and 3-phosphoglycerate. The polypeptide is 2,3-bisphosphoglycerate-dependent phosphoglycerate mutase (Enterococcus faecalis (strain ATCC 700802 / V583)).